The primary structure comprises 814 residues: DNA ligase (814 aa).

Residues 46-50, 95-96, and Glu-129 each bind NAD(+); these read DAEYD and SL. The active-site N6-AMP-lysine intermediate is the Lys-131. Residues Arg-152, Glu-189, Lys-305, and Lys-329 each contribute to the NAD(+) site. Residues Cys-434, Cys-437, Cys-458, and Cys-464 each contribute to the Zn(2+) site. The tract at residues 525–548 is disordered; the sequence is LSAQRRSEGEPAPKKPTKKKGEEE. Residues 735-814 form the BRCT domain; sequence TSAAAFAGKT…DDWLAMLAEA (80 aa).

The protein belongs to the NAD-dependent DNA ligase family. LigA subfamily. It depends on Mg(2+) as a cofactor. Mn(2+) is required as a cofactor.

It catalyses the reaction NAD(+) + (deoxyribonucleotide)n-3'-hydroxyl + 5'-phospho-(deoxyribonucleotide)m = (deoxyribonucleotide)n+m + AMP + beta-nicotinamide D-nucleotide.. DNA ligase that catalyzes the formation of phosphodiester linkages between 5'-phosphoryl and 3'-hydroxyl groups in double-stranded DNA using NAD as a coenzyme and as the energy source for the reaction. It is essential for DNA replication and repair of damaged DNA. The protein is DNA ligase of Methylorubrum extorquens (strain PA1) (Methylobacterium extorquens).